A 390-amino-acid polypeptide reads, in one-letter code: Chorismate synthase 2 (390 aa).

Positions 39 and 45 each coordinate NADP(+). FMN is bound by residues 132–134 (RSS), 253–254 (NA), glycine 298, 313–317 (KPIPT), and arginine 339.

It belongs to the chorismate synthase family. Homotetramer. The cofactor is FMNH2.

The enzyme catalyses 5-O-(1-carboxyvinyl)-3-phosphoshikimate = chorismate + phosphate. It functions in the pathway metabolic intermediate biosynthesis; chorismate biosynthesis; chorismate from D-erythrose 4-phosphate and phosphoenolpyruvate: step 7/7. Its function is as follows. Catalyzes the anti-1,4-elimination of the C-3 phosphate and the C-6 proR hydrogen from 5-enolpyruvylshikimate-3-phosphate (EPSP) to yield chorismate, which is the branch point compound that serves as the starting substrate for the three terminal pathways of aromatic amino acid biosynthesis. This reaction introduces a second double bond into the aromatic ring system. In Bacillus thuringiensis subsp. konkukian (strain 97-27), this protein is Chorismate synthase 2.